Here is a 509-residue protein sequence, read N- to C-terminus: Pentatricopeptide repeat-containing protein At2g13420, mitochondrial (509 aa).

The transit peptide at 1-19 directs the protein to the mitochondrion; sequence MLLLKQISPPFHLHQLRRR. 8 PPR repeats span residues 172–202, 206–240, 241–285, 286–320, 321–355, 356–390, 391–425, and 426–460; these read RLVE…RKEE, DEKV…GIEP, NVVT…GIEP, DVTS…GISP, TIET…GISP, SSAT…LCKP, STQT…ETGP, and DLDS…GFLP.

Belongs to the PPR family. P subfamily.

It localises to the mitochondrion. This Arabidopsis thaliana (Mouse-ear cress) protein is Pentatricopeptide repeat-containing protein At2g13420, mitochondrial.